We begin with the raw amino-acid sequence, 503 residues long: Cytochrome P450 3A17 (503 aa).

A heme-binding site is contributed by Cys-442.

This sequence belongs to the cytochrome P450 family. It depends on heme as a cofactor.

Its subcellular location is the endoplasmic reticulum membrane. The protein resides in the microsome membrane. The catalysed reaction is an organic molecule + reduced [NADPH--hemoprotein reductase] + O2 = an alcohol + oxidized [NADPH--hemoprotein reductase] + H2O + H(+). In terms of biological role, cytochromes P450 are a group of heme-thiolate monooxygenases. In liver microsomes, this enzyme is involved in an NADPH-dependent electron transport pathway. It oxidizes a variety of structurally unrelated compounds, including steroids, fatty acids, and xenobiotics. The protein is Cytochrome P450 3A17 (CYP3A17) of Cavia porcellus (Guinea pig).